Consider the following 266-residue polypeptide: Undecaprenyl-diphosphatase (266 aa).

8 helical membrane passes run M1–I21, Q39–F59, W87–I107, L111–A131, F143–T163, F186–L206, E217–L237, and I243–L263.

It belongs to the UppP family.

Its subcellular location is the cell inner membrane. It carries out the reaction di-trans,octa-cis-undecaprenyl diphosphate + H2O = di-trans,octa-cis-undecaprenyl phosphate + phosphate + H(+). Catalyzes the dephosphorylation of undecaprenyl diphosphate (UPP). Confers resistance to bacitracin. The protein is Undecaprenyl-diphosphatase of Hahella chejuensis (strain KCTC 2396).